A 747-amino-acid polypeptide reads, in one-letter code: Cysteine--tRNA ligase, cytoplasmic (747 aa).

Residues 1–26 form a disordered region; it reads MTESWEQGKGRRTQPPWSAPNTNEQP. The segment covering 15-25 has biased composition (polar residues); the sequence is PPWSAPNTNEQ. Cys54 is a binding site for Zn(2+). Gly55 provides a ligand contact to L-cysteine. Residues 56–66 carry the 'HIGH' region motif; it reads PTVYDASHMGH. An L-cysteine-binding site is contributed by Thr95. The short motif at 100–103 is the 'KIIK' region element; sequence KIIK. Positions 347, 372, and 376 each coordinate Zn(2+). His372 is an L-cysteine binding site. The short motif at 405-409 is the 'KMSKS' region element; that stretch reads KMSKS. An ATP-binding site is contributed by Lys408. Basic and acidic residues predominate over residues 651–683; it reads EEKRKAEEEKQRKKEEAARKKQQQEAAKLEKMK. Disordered stretches follow at residues 651–685 and 700–721; these read EEKR…MKIS and FDES…GQTK.

The protein belongs to the class-I aminoacyl-tRNA synthetase family. Homodimer. Zn(2+) serves as cofactor.

The protein localises to the cytoplasm. It catalyses the reaction tRNA(Cys) + L-cysteine + ATP = L-cysteinyl-tRNA(Cys) + AMP + diphosphate. In terms of biological role, catalyzes the ATP-dependent ligation of cysteine to tRNA(Cys). The protein is Cysteine--tRNA ligase, cytoplasmic (cars1) of Xenopus laevis (African clawed frog).